The primary structure comprises 1079 residues: Isoleucine--tRNA ligase (1079 aa).

The 'HIGH' region motif lies at 53-63; sequence PFANGLPHYGH. Residues 611–615 carry the 'KMSKS' region motif; that stretch reads KLSKR. An ATP-binding site is contributed by K614.

The protein belongs to the class-I aminoacyl-tRNA synthetase family. IleS type 2 subfamily. Monomer. It depends on Zn(2+) as a cofactor.

It is found in the cytoplasm. The catalysed reaction is tRNA(Ile) + L-isoleucine + ATP = L-isoleucyl-tRNA(Ile) + AMP + diphosphate. Catalyzes the attachment of isoleucine to tRNA(Ile). As IleRS can inadvertently accommodate and process structurally similar amino acids such as valine, to avoid such errors it has two additional distinct tRNA(Ile)-dependent editing activities. One activity is designated as 'pretransfer' editing and involves the hydrolysis of activated Val-AMP. The other activity is designated 'posttransfer' editing and involves deacylation of mischarged Val-tRNA(Ile). In Rickettsia canadensis (strain McKiel), this protein is Isoleucine--tRNA ligase.